The primary structure comprises 199 residues: 5'-deoxynucleotidase YfbR (199 aa).

Substrate is bound by residues 18 to 19 (RW) and H33. Residues 30–142 (VSEHSLQVAM…VKQADALCAY (113 aa)) form the HD domain. Positions 33, 68, and 69 each coordinate a divalent metal cation. Substrate is bound by residues D69, 77 to 80 (DLPT), and D137. D137 provides a ligand contact to a divalent metal cation.

It belongs to the 5DNU family. In terms of assembly, homodimer. Requires a divalent metal cation as cofactor.

It is found in the cytoplasm. It carries out the reaction a 2'-deoxyribonucleoside 5'-phosphate + H2O = a 2'-deoxyribonucleoside + phosphate. Catalyzes the strictly specific dephosphorylation of 2'-deoxyribonucleoside 5'-monophosphates. This Salmonella agona (strain SL483) protein is 5'-deoxynucleotidase YfbR.